The following is a 151-amino-acid chain: Small ribosomal subunit protein uS19 (151 aa).

It belongs to the universal ribosomal protein uS19 family.

Functionally, protein S19 forms a complex with S13 that binds strongly to the 16S ribosomal RNA. This Thermoplasma acidophilum (strain ATCC 25905 / DSM 1728 / JCM 9062 / NBRC 15155 / AMRC-C165) protein is Small ribosomal subunit protein uS19 (rps19).